A 1047-amino-acid chain; its full sequence is Carbamoyl phosphate synthase large chain (1047 aa).

The carboxyphosphate synthetic domain stretch occupies residues 1–398 (MPRRDDIHRI…ALMKAIASLD (398 aa)). 12 residues coordinate ATP: R129, R169, G175, G176, E208, L210, E215, G241, V242, H243, Q284, and E296. The ATP-grasp 1 domain maps to 133 to 325 (YEFLKAMGEP…IARIAAKIAA (193 aa)). Positions 284, 296, and 298 each coordinate Mg(2+). The Mn(2+) site is built by Q284, E296, and N298. Residues 399–539 (NAFSSNIRLH…YSTYEDEDET (141 aa)) are oligomerization domain. Residues 540–916 (PDLSGSIMII…ALRKSLQRSI (377 aa)) form a carbamoyl phosphate synthetic domain region. The region spanning 665 to 854 (SRVIEGLGIK…WVRLAVECMI (190 aa)) is the ATP-grasp 2 domain. ATP is bound by residues R701, K738, L740, E745, G770, V771, H772, S773, Q813, and E825. The Mg(2+) site is built by Q813, E825, and N827. Mn(2+)-binding residues include Q813, E825, and N827. In terms of domain architecture, MGS-like spans 910–1047 (KSLQRSISSV…REIGDYLQVS (138 aa)). Residues 916 to 1047 (ISSVLITVRD…REIGDYLQVS (132 aa)) form an allosteric domain region.

The protein belongs to the CarB family. As to quaternary structure, composed of two chains; the small (or glutamine) chain promotes the hydrolysis of glutamine to ammonia, which is used by the large (or ammonia) chain to synthesize carbamoyl phosphate. Tetramer of heterodimers (alpha,beta)4. Mg(2+) is required as a cofactor. Requires Mn(2+) as cofactor.

It carries out the reaction hydrogencarbonate + L-glutamine + 2 ATP + H2O = carbamoyl phosphate + L-glutamate + 2 ADP + phosphate + 2 H(+). The catalysed reaction is hydrogencarbonate + NH4(+) + 2 ATP = carbamoyl phosphate + 2 ADP + phosphate + 2 H(+). The protein operates within amino-acid biosynthesis; L-arginine biosynthesis; carbamoyl phosphate from bicarbonate: step 1/1. Its pathway is pyrimidine metabolism; UMP biosynthesis via de novo pathway; (S)-dihydroorotate from bicarbonate: step 1/3. Functionally, large subunit of the glutamine-dependent carbamoyl phosphate synthetase (CPSase). CPSase catalyzes the formation of carbamoyl phosphate from the ammonia moiety of glutamine, carbonate, and phosphate donated by ATP, constituting the first step of 2 biosynthetic pathways, one leading to arginine and/or urea and the other to pyrimidine nucleotides. The large subunit (synthetase) binds the substrates ammonia (free or transferred from glutamine from the small subunit), hydrogencarbonate and ATP and carries out an ATP-coupled ligase reaction, activating hydrogencarbonate by forming carboxy phosphate which reacts with ammonia to form carbamoyl phosphate. The sequence is that of Carbamoyl phosphate synthase large chain from Thermoplasma acidophilum (strain ATCC 25905 / DSM 1728 / JCM 9062 / NBRC 15155 / AMRC-C165).